Consider the following 813-residue polypeptide: Phosphate transporter PHO1 homolog 3 (813 aa).

The SPX domain occupies 1–359; that stretch reads MKFGKEFSSQ…SRDATKPYMK (359 aa). At 1 to 411 the chain is on the cytoplasmic side; that stretch reads MKFGKEFSSQ…KAKRERHRIT (411 aa). Positions 214 to 266 are disordered; it reads EHMEAIQEGGSSRAGLMEDDEEDEDEQNETSVVSTGAIDNETTTSRMRGARPS. Over residues 230–241 the composition is skewed to acidic residues; sequence MEDDEEDEDEQN. The helical transmembrane segment at 412–432 threads the bilayer; it reads FSTGFSAGCVFSLIVALVAII. Over 433 to 450 the chain is Extracellular; that stretch reads RTRNLLEMEGQKEYMNTM. A helical transmembrane segment spans residues 451–471; sequence FPLYSLFGFIVLHIIVYAANI. Topologically, residues 472–496 are cytoplasmic; it reads YYWRRYRVNYSFIFGFKQGTELGYR. Residues 497 to 517 traverse the membrane as a helical segment; sequence QVLLVGFSIGVLALLCVLANL. Residues 518-533 lie on the Extracellular side of the membrane; that stretch reads DMEADPKTKAYQARTE. Residues 534-554 traverse the membrane as a helical segment; that stretch reads ILPLILLAAMFIVLVLPFNYF. Over 555–684 the chain is Cytoplasmic; sequence YRSSRFFFLT…SIQKGQVAWR (130 aa). One can recognise an EXS domain in the interval 618-813; the sequence is KESDVYNTFF…NYDEDDDKDN (196 aa). A helical membrane pass occupies residues 685 to 705; sequence VLAAVFSFIAAIFCTYWDFVH. Topologically, residues 706 to 729 are extracellular; that stretch reads DWGLLNRTSKNRWLRDKLLVPQKK. The chain crosses the membrane as a helical span at residues 730–750; that stretch reads VYFIAMVLNVLLRFAWIQTVL. The Cytoplasmic segment spans residues 751–813; that stretch reads DFNFSFMHRQ…NYDEDDDKDN (63 aa).

Belongs to the SYG1 (TC 2.A.94) family. In terms of tissue distribution, expressed in vascular cylinder of roots, leaves and filaments. Expressed in receptacle and stigma apex.

It is found in the cell membrane. May transport inorganic phosphate (Pi). This Arabidopsis thaliana (Mouse-ear cress) protein is Phosphate transporter PHO1 homolog 3 (PHO1;H3).